Reading from the N-terminus, the 536-residue chain is Membrane protein insertase YidC (536 aa).

5 consecutive transmembrane segments (helical) span residues 7-27 (FFIF…QSQS), 338-358 (LLST…LITF), 419-439 (LPVF…IGSV), 453-473 (LSDQ…MFFI), and 494-514 (PFIF…YYIV).

This sequence belongs to the OXA1/ALB3/YidC family. Type 1 subfamily. As to quaternary structure, interacts with the Sec translocase complex via SecD. Specifically interacts with transmembrane segments of nascent integral membrane proteins during membrane integration.

It is found in the cell membrane. Functionally, required for the insertion and/or proper folding and/or complex formation of integral membrane proteins into the membrane. Involved in integration of membrane proteins that insert both dependently and independently of the Sec translocase complex, as well as at least some lipoproteins. Aids folding of multispanning membrane proteins. The protein is Membrane protein insertase YidC of Buchnera aphidicola subsp. Schizaphis graminum (strain Sg).